The chain runs to 188 residues: Pyridoxal 5'-phosphate synthase subunit PdxT (188 aa).

47–49 (GES) contributes to the L-glutamine binding site. The active-site Nucleophile is C79. Residues R106 and 134-135 (IR) each bind L-glutamine. Active-site charge relay system residues include H169 and E171.

This sequence belongs to the glutaminase PdxT/SNO family. In terms of assembly, in the presence of PdxS, forms a dodecamer of heterodimers. Only shows activity in the heterodimer.

It carries out the reaction aldehydo-D-ribose 5-phosphate + D-glyceraldehyde 3-phosphate + L-glutamine = pyridoxal 5'-phosphate + L-glutamate + phosphate + 3 H2O + H(+). The enzyme catalyses L-glutamine + H2O = L-glutamate + NH4(+). It participates in cofactor biosynthesis; pyridoxal 5'-phosphate biosynthesis. In terms of biological role, catalyzes the hydrolysis of glutamine to glutamate and ammonia as part of the biosynthesis of pyridoxal 5'-phosphate. The resulting ammonia molecule is channeled to the active site of PdxS. The chain is Pyridoxal 5'-phosphate synthase subunit PdxT from Caldicellulosiruptor saccharolyticus (strain ATCC 43494 / DSM 8903 / Tp8T 6331).